Here is a 253-residue protein sequence, read N- to C-terminus: uncharacterized protein (253 aa).

This is an uncharacterized protein from Mycoplasma pneumoniae (strain ATCC 29342 / M129 / Subtype 1) (Mycoplasmoides pneumoniae).